A 114-amino-acid chain; its full sequence is Acetyltransferase At1g77540 (114 aa).

N-acetylthreonine is present on Thr-2. Residues 18–106 form the N-acetyltransferase domain; that stretch reads KIVWNEGKRR…RNPSWKPLIH (89 aa). Residues 52 to 55 and 61 to 66 each bind CoA; these read HTYV and GLGLAS. The active-site Nucleophile is the Cys-87. Residues 88-89, Thr-93, and Arg-97 contribute to the CoA site; that span reads SY.

The protein localises to the peroxisome. In terms of biological role, possesses in vitro histone acetyltransferase activity with histones H3 and H4. This is Acetyltransferase At1g77540 from Arabidopsis thaliana (Mouse-ear cress).